The chain runs to 645 residues: uncharacterized protein (645 aa).

This sequence belongs to the mycobacterial PPE family.

This is an uncharacterized protein from Mycobacterium tuberculosis (strain CDC 1551 / Oshkosh).